The primary structure comprises 155 residues: Ribosome maturation factor RimP (155 aa).

It belongs to the RimP family.

The protein resides in the cytoplasm. Its function is as follows. Required for maturation of 30S ribosomal subunits. The protein is Ribosome maturation factor RimP of Staphylococcus saprophyticus subsp. saprophyticus (strain ATCC 15305 / DSM 20229 / NCIMB 8711 / NCTC 7292 / S-41).